The following is a 286-amino-acid chain: Putative S-adenosyl-L-methionine-dependent methyltransferase FRAAL3718 (286 aa).

S-adenosyl-L-methionine is bound by residues Asp-122 and 151-152 (DL).

Belongs to the UPF0677 family.

In terms of biological role, exhibits S-adenosyl-L-methionine-dependent methyltransferase activity. The protein is Putative S-adenosyl-L-methionine-dependent methyltransferase FRAAL3718 of Frankia alni (strain DSM 45986 / CECT 9034 / ACN14a).